A 273-amino-acid chain; its full sequence is MTDQTLRLENVSPYLLLILDYFEKNCINKTDLFSIQGNQENVNRIISNIKNFTPTKQFEKDLNRGLYSRHDLSFSIINILNSLNHPLLLENYNEAYIVNAYYEDIERIKQTLLELPHSNLEIILKLFSTFNLLCNQEEHKSFLLLSPEMLGETFAFVLMRFKKTKDEVDQFGNKIFATNVISYLISHFNEIFDSTILDFEQKEKKSRENAILFMEYAMRKYTSLDNHFKSIYNKYIPHKRDLSQEDVQTIKTEFNLRKYSGKSKIRPPIPIYM.

The Rho-GAP domain occupies methionine 1–phenylalanine 192.

It localises to the cytoplasm. In terms of biological role, rho GTPase-activating protein involved in the signal transduction pathway. The polypeptide is Rho GTPase-activating protein gacB (gacB) (Dictyostelium discoideum (Social amoeba)).